We begin with the raw amino-acid sequence, 261 residues long: Phosphatidylglycerol--prolipoprotein diacylglyceryl transferase (261 aa).

3 consecutive transmembrane segments (helical) span residues 20-40, 54-74, and 94-114; these read LAIH…VWLA, IIDF…LYYV, and GGGA…VFSY. Arginine 139 contacts a 1,2-diacyl-sn-glycero-3-phospho-(1'-sn-glycerol). Helical transmembrane passes span 175-195, 205-225, and 235-255; these read MPTF…VMVF, GDIF…VEGM, and ARVS…LFIY.

The protein belongs to the Lgt family.

The protein localises to the cell membrane. The enzyme catalyses L-cysteinyl-[prolipoprotein] + a 1,2-diacyl-sn-glycero-3-phospho-(1'-sn-glycerol) = an S-1,2-diacyl-sn-glyceryl-L-cysteinyl-[prolipoprotein] + sn-glycerol 1-phosphate + H(+). The protein operates within protein modification; lipoprotein biosynthesis (diacylglyceryl transfer). Catalyzes the transfer of the diacylglyceryl group from phosphatidylglycerol to the sulfhydryl group of the N-terminal cysteine of a prolipoprotein, the first step in the formation of mature lipoproteins. This Lactococcus lactis subsp. lactis (strain IL1403) (Streptococcus lactis) protein is Phosphatidylglycerol--prolipoprotein diacylglyceryl transferase.